Here is a 331-residue protein sequence, read N- to C-terminus: Ketol-acid reductoisomerase (NADP(+)) (331 aa).

In terms of domain architecture, KARI N-terminal Rossmann spans 1-182 (MATLYYDTDA…GGTRAGILET (182 aa)). Residues 25-28 (YGSQ), Ser51, Ser53, and 83-86 (DEFQ) contribute to the NADP(+) site. His108 is a catalytic residue. An NADP(+)-binding site is contributed by Gly134. The KARI C-terminal knotted domain occupies 183–328 (NFKEETETDL…KGLRAMFSWL (146 aa)). Mg(2+) contacts are provided by Asp191, Glu195, Glu227, and Glu231. Substrate is bound at residue Ser252.

Belongs to the ketol-acid reductoisomerase family. Mg(2+) is required as a cofactor.

It carries out the reaction (2R)-2,3-dihydroxy-3-methylbutanoate + NADP(+) = (2S)-2-acetolactate + NADPH + H(+). It catalyses the reaction (2R,3R)-2,3-dihydroxy-3-methylpentanoate + NADP(+) = (S)-2-ethyl-2-hydroxy-3-oxobutanoate + NADPH + H(+). The protein operates within amino-acid biosynthesis; L-isoleucine biosynthesis; L-isoleucine from 2-oxobutanoate: step 2/4. It functions in the pathway amino-acid biosynthesis; L-valine biosynthesis; L-valine from pyruvate: step 2/4. In terms of biological role, involved in the biosynthesis of branched-chain amino acids (BCAA). Catalyzes an alkyl-migration followed by a ketol-acid reduction of (S)-2-acetolactate (S2AL) to yield (R)-2,3-dihydroxy-isovalerate. In the isomerase reaction, S2AL is rearranged via a Mg-dependent methyl migration to produce 3-hydroxy-3-methyl-2-ketobutyrate (HMKB). In the reductase reaction, this 2-ketoacid undergoes a metal-dependent reduction by NADPH to yield (R)-2,3-dihydroxy-isovalerate. The polypeptide is Ketol-acid reductoisomerase (NADP(+)) (Synechococcus sp. (strain RCC307)).